The primary structure comprises 312 residues: Malate dehydrogenase (312 aa).

NAD(+) is bound by residues G7–G13 and D34. Residues R81 and R87 each contribute to the substrate site. Residues N94 and I117–N119 contribute to the NAD(+) site. Substrate is bound by residues N119 and R153. The active-site Proton acceptor is H177. Residue M227 participates in NAD(+) binding.

Belongs to the LDH/MDH superfamily. MDH type 1 family. As to quaternary structure, homodimer.

The enzyme catalyses (S)-malate + NAD(+) = oxaloacetate + NADH + H(+). In terms of biological role, catalyzes the reversible oxidation of malate to oxaloacetate. The chain is Malate dehydrogenase from Escherichia coli (strain 55989 / EAEC).